A 1744-amino-acid chain; its full sequence is Probable disease resistance protein At4g19520 (1744 aa).

A TIR 1 domain is found at 3 to 163 (DGKEVYISFN…KIVADVRQKL (161 aa)). The active site involves E80. The NB-ARC domain maps to 192-411 (SLGIWGMAGI…VSEKEIFLDI (220 aa)). LRR repeat units follow at residues 503 to 526 (YEDV…AFQH), 557 to 581 (PPEL…GFQY), 583 to 602 (VELN…TKNL), 603 to 626 (EVLK…QYSP), 648 to 669 (LQHL…PKVP), 670 to 692 (PSIR…NHSS), 710 to 733 (DHRK…IVIF), 734 to 754 (ESLE…QGFP), 755 to 777 (QNLK…LCHH), 779 to 802 (SKLV…MSNM), 804 to 823 (YLAV…KELP), 824 to 846 (RNLK…LLET), 848 to 871 (SEVV…MSKL), 892 to 915 (PLNL…IGDL), 917 to 939 (LLDT…MHNL), 941 to 963 (PLKV…LPKV), 987 to 1010 (YEHR…IRWM), 1011 to 1035 (PSLK…DFSK), 1037 to 1059 (LSLR…SLQL), and 1062 to 1086 (AHGC…TFSN). Residues 1399-1559 (RNNDVFVSFH…KVANDIRKKL (161 aa)) enclose the TIR 2 domain.

It belongs to the disease resistance TIR-NB-LRR family.

The catalysed reaction is NAD(+) + H2O = ADP-D-ribose + nicotinamide + H(+). Its function is as follows. Probable disease resistance protein. This chain is Probable disease resistance protein At4g19520, found in Arabidopsis thaliana (Mouse-ear cress).